The sequence spans 56 residues: Ovomucoid (56 aa).

In terms of domain architecture, Kazal-like spans 6-56 (VDCSEYPKPACTLEYRPLCGSDSKTYANKCNFCNAVVESNGTLTLSHFGKC). Disulfide bonds link Cys8–Cys38, Cys16–Cys35, and Cys24–Cys56. The N-linked (GlcNAc...) asparagine glycan is linked to Asn45.

The protein resides in the secreted. The polypeptide is Ovomucoid (Oreortyx pictus (Mountain quail)).